A 164-amino-acid polypeptide reads, in one-letter code: HTH-type transcriptional regulator PapX (164 aa).

One can recognise an HTH marR-type domain in the interval 25–159 (EHLLMQLCIR…FEVISKKLLA (135 aa)).

The protein localises to the cytoplasm. This chain is HTH-type transcriptional regulator PapX (papX), found in Escherichia coli.